We begin with the raw amino-acid sequence, 367 residues long: Protein RIC-3 (367 aa).

The N-terminal stretch at 1-31 is a signal peptide; sequence MAYSTVQRVALASGLVLAVSLLLPKAFLSRG. Positions 30-67 are disordered; sequence RGKRPEPPPGPEGKLDRFPPMMHHHSAPSDGQTPGARF. Topologically, residues 32–95 are lumenal; that stretch reads KRPEPPPGPE…AGGGGSGRGL (64 aa). The chain crosses the membrane as a helical span at residues 96 to 116; it reads MGQIIPIYGFGIFLYILYILF. The Cytoplasmic segment spans residues 117–367; it reads KLSKGKTAED…LRKRNPQGFE (251 aa). Residues 138 to 169 are a coiled coil; the sequence is HRKITNFELVQLQEKLKETEEAMEKLINRVGP. Lys-201 bears the N6-acetyllysine; alternate mark. A Glycyl lysine isopeptide (Lys-Gly) (interchain with G-Cter in ubiquitin); alternate cross-link involves residue Lys-201. Disordered stretches follow at residues 262–301 and 322–367; these read QMGE…PESC and ADGY…QGFE. A compositionally biased stretch (basic and acidic residues) spans 271 to 280; the sequence is SERLSWDHLP. Residues 358–367 show a composition bias toward basic residues; the sequence is LRKRNPQGFE.

It belongs to the ric-3 family. As to quaternary structure, monomer and homodimer. Interacts with CHRNA7, CHRNA3, CHRNA4, CHRNB2, CHRNB4 and HTR3A. As to expression, expressed in brain, with highest levels in hippocampus, cerebellum and superior colliculus.

Its subcellular location is the endoplasmic reticulum membrane. Its function is as follows. Molecular chaperone which promotes the proper subunit assembly and surface trafficking of alpha-7 (CHRNA7) nicotinic acetylcholine receptor. Promotes the proper subunit assembly and cell surface expression of alpha-8 (CHRNA8) nicotinic acetylcholine receptor. May also promote functional expression of homomeric serotoninergic 5-HT3 receptors, and of heteromeric acetylcholine receptors alpha-3/beta-2, alpha-3/beta-4, alpha-4/beta-2 and alpha-4/beta-4. The protein is Protein RIC-3 (Ric3) of Mus musculus (Mouse).